The sequence spans 669 residues: DNA ligase (669 aa).

Residues 34 to 38, 83 to 84, and Glu-114 contribute to the NAD(+) site; these read DAEYD and SL. The active-site N6-AMP-lysine intermediate is the Lys-116. NAD(+)-binding residues include Arg-137, Glu-171, Lys-287, and Lys-311. Zn(2+) is bound by residues Cys-405, Cys-408, Cys-423, and Cys-428. The 79-residue stretch at 591 to 669 folds into the BRCT domain; sequence NVESYFAGKT…EERFLQELNK (79 aa).

This sequence belongs to the NAD-dependent DNA ligase family. LigA subfamily. Mg(2+) is required as a cofactor. It depends on Mn(2+) as a cofactor.

It catalyses the reaction NAD(+) + (deoxyribonucleotide)n-3'-hydroxyl + 5'-phospho-(deoxyribonucleotide)m = (deoxyribonucleotide)n+m + AMP + beta-nicotinamide D-nucleotide.. Functionally, DNA ligase that catalyzes the formation of phosphodiester linkages between 5'-phosphoryl and 3'-hydroxyl groups in double-stranded DNA using NAD as a coenzyme and as the energy source for the reaction. It is essential for DNA replication and repair of damaged DNA. The polypeptide is DNA ligase (Bacillus anthracis (strain A0248)).